A 396-amino-acid polypeptide reads, in one-letter code: 1-deoxy-D-xylulose 5-phosphate reductoisomerase (396 aa).

The NADPH site is built by T13, G14, S15, I16, and N127. 1-deoxy-D-xylulose 5-phosphate is bound at residue K128. E129 is an NADPH binding site. D153 is a binding site for Mn(2+). 1-deoxy-D-xylulose 5-phosphate-binding residues include S154, E155, S184, and H207. E155 lines the Mn(2+) pocket. G213 contacts NADPH. Residues S220, N225, K226, and E229 each contribute to the 1-deoxy-D-xylulose 5-phosphate site. E229 serves as a coordination point for Mn(2+).

This sequence belongs to the DXR family. The cofactor is Mg(2+). Mn(2+) is required as a cofactor.

The enzyme catalyses 2-C-methyl-D-erythritol 4-phosphate + NADP(+) = 1-deoxy-D-xylulose 5-phosphate + NADPH + H(+). It functions in the pathway isoprenoid biosynthesis; isopentenyl diphosphate biosynthesis via DXP pathway; isopentenyl diphosphate from 1-deoxy-D-xylulose 5-phosphate: step 1/6. In terms of biological role, catalyzes the NADPH-dependent rearrangement and reduction of 1-deoxy-D-xylulose-5-phosphate (DXP) to 2-C-methyl-D-erythritol 4-phosphate (MEP). This chain is 1-deoxy-D-xylulose 5-phosphate reductoisomerase, found in Pseudomonas putida (strain W619).